The chain runs to 100 residues: Sodium-influx-stimulating peptide (100 aa).

Positions 1-23 (MLSSVALRYLLVLSLAFLAVVTS) are cleaved as a signal peptide.

In terms of processing, three disulfide bonds are present. In terms of tissue distribution, expressed by the yellow cells, peptidergic (neuroendocrine) neurons of the central nervous system.

Functionally, stimulates integumental Na(+) uptake. Controls the activity of sodium pumps in the integument, pericardium, ureter and nephridial gland. The polypeptide is Sodium-influx-stimulating peptide (SIS) (Lymnaea stagnalis (Great pond snail)).